The sequence spans 444 residues: Phosphoglucosamine mutase (444 aa).

S103 acts as the Phosphoserine intermediate in catalysis. The Mg(2+) site is built by S103, D242, D244, and D246. S103 is modified (phosphoserine).

Belongs to the phosphohexose mutase family. Mg(2+) is required as a cofactor. Post-translationally, activated by phosphorylation.

It catalyses the reaction alpha-D-glucosamine 1-phosphate = D-glucosamine 6-phosphate. Catalyzes the conversion of glucosamine-6-phosphate to glucosamine-1-phosphate. The polypeptide is Phosphoglucosamine mutase (Hydrogenovibrio crunogenus (strain DSM 25203 / XCL-2) (Thiomicrospira crunogena)).